We begin with the raw amino-acid sequence, 561 residues long: Urocanate hydratase (561 aa).

NAD(+)-binding positions include 52–53 (GG), Q130, 176–178 (GMG), E196, R201, 242–243 (NA), 263–267 (QTSAH), 273–274 (YL), and Y322. The active site involves C410. G492 contributes to the NAD(+) binding site.

This sequence belongs to the urocanase family. The cofactor is NAD(+).

The protein localises to the cytoplasm. It catalyses the reaction 4-imidazolone-5-propanoate = trans-urocanate + H2O. It participates in amino-acid degradation; L-histidine degradation into L-glutamate; N-formimidoyl-L-glutamate from L-histidine: step 2/3. Its function is as follows. Catalyzes the conversion of urocanate to 4-imidazolone-5-propionate. This is Urocanate hydratase from Salmonella arizonae (strain ATCC BAA-731 / CDC346-86 / RSK2980).